A 1782-amino-acid polypeptide reads, in one-letter code: A-kinase anchor protein 12 (1782 aa).

Disordered stretches follow at residues 1 to 53, 71 to 169, 189 to 400, 421 to 886, 938 to 1089, 1105 to 1134, 1157 to 1274, and 1305 to 1355; these read MGAG…DPAT, QDEL…QAND, KTEK…APLA, VSTV…ELSE, EREV…LKKE, PFTQGKVVGQTTPESFEKAPQVTESIESSE, AIPP…ADEK, and KGEG…HVNE. Residue glycine 2 is the site of N-myristoyl glycine attachment. Phosphoserine occurs at positions 11, 19, 28, 75, and 96. Over residues 16 to 53 the composition is skewed to low complexity; it reads PEGSSTPAEPEPSGGGPSAEAAPDTTADPAIAASDPAT. Positions 108 to 125 are enriched in basic and acidic residues; it reads GQRDSEDVSKRDSDKEMA. Residues 145 to 154 show a composition bias toward low complexity; that stretch reads IIEQIPSSES. A Phosphoserine modification is found at serine 154. Over residues 157–168 the composition is skewed to polar residues; that stretch reads EELTQPTESQAN. Residues serine 219, serine 248, serine 258, serine 280, serine 283, serine 286, serine 347, and serine 371 each carry the phosphoserine modification. Positions 226–249 are enriched in basic and acidic residues; that stretch reads ASKESEPKQSTEKPEETLKREQSH. Residues 266-557 form an involved in PKC-binding region; the sequence is KEEGEEKQEK…TQVPADSPDS (292 aa). Basic and acidic residues-rich tracts occupy residues 315–347 and 363–379; these read KPKEDEVEASEKKKEQEPEKVDTEEDGKAEVAS and ESAHEPRLSAEYEKVEL. Position 374 is a phosphotyrosine (tyrosine 374). Phosphoserine occurs at positions 381 and 392. Basic and acidic residues predominate over residues 423–435; the sequence is TVEERTEEQKTEV. The segment covering 446–456 has biased composition (acidic residues); sequence ELVEMDAEPQE. Positions 458–468 are enriched in basic and acidic residues; it reads EPAKELVKLKE. A phosphoserine mark is found at serine 483 and serine 505. The span at 528–537 shows a compositional bias: basic residues; it reads LSGKKQKGKR. 6 positions are modified to phosphoserine: serine 554, serine 557, serine 598, serine 612, serine 627, and serine 629. The AKAP CaM-binding 1 motif lies at 607–627; sequence VTPWASFKKMVTPKKRVRRPS. The segment covering 625 to 639 has biased composition (basic and acidic residues); the sequence is RPSESDKEDELDKVK. The span at 640 to 652 shows a compositional bias: low complexity; that stretch reads SATLSSTESTASE. Position 642 is a phosphothreonine (threonine 642). Serine 644, serine 645, serine 648, and serine 651 each carry phosphoserine. The segment covering 655–674 has biased composition (basic and acidic residues); sequence EEMKGSVEEPKPEEPKRKVD. Phosphoserine occurs at positions 696, 697, and 698. Over residues 708-724 the composition is skewed to basic and acidic residues; sequence GGDHQKADEAGKDKETG. Residues 739–749 are compositionally biased toward polar residues; the sequence is QGSSSPEQAGS. Residues serine 749, serine 761, and serine 787 each carry the phosphoserine modification. The AKAP CaM-binding 2 motif lies at 756–776; it reads VSTWESFKRLVTPRKKSKSKL. The segment covering 792–803 has biased composition (basic and acidic residues); it reads STPDTEPGKEES. Residues 801–821 carry the AKAP CaM-binding 3 motif; the sequence is EESWVSIKKFIPGRRKKRPDG. The residue at position 806 (serine 806) is a Phosphoserine. Positions 986-997 are enriched in low complexity; it reads GAEEGTEASAAE. Residue lysine 1051 forms a Glycyl lysine isopeptide (Lys-Gly) (interchain with G-Cter in SUMO1) linkage. Basic and acidic residues predominate over residues 1072–1089; that stretch reads AEAERPEEQAEASGLKKE. The span at 1164 to 1174 shows a compositional bias: polar residues; sequence ETPTDSETDGS. 2 stretches are compositionally biased toward basic and acidic residues: residues 1187–1198 and 1231–1251; these read QKDEIVEIHEEN and EETKEQSKMEDTLEHTDKEVS. The segment covering 1253–1267 has biased composition (polar residues); it reads ETVSILSKTEGTQEA. Phosphoserine is present on residues serine 1328 and serine 1331. Positions 1333 to 1355 are enriched in basic and acidic residues; the sequence is VEREMVVQVEREKTEAEPTHVNE. Phosphoserine occurs at positions 1391 and 1395. Residues 1541–1554 are RII-binding; that stretch reads ELETKSSKLVQNII. The interval 1584–1782 is disordered; the sequence is KADSQDAGQE…ESAKSELTES (199 aa). Serine 1587 is subject to Phosphoserine. Residues 1603–1612 are compositionally biased toward polar residues; sequence ASAQDETPIT. Basic and acidic residues-rich tracts occupy residues 1629-1639 and 1675-1699; these read DISKDMSEASE and VPEDDGHALLAERIEKSLVEPKEDE. Serine 1727 is subject to Phosphoserine. Composition is skewed to basic and acidic residues over residues 1734 to 1757 and 1766 to 1782; these read KQKEKEDAQEVELQEGKVHSESDK and ELQKQERESAKSELTES.

Binds to dimeric RII-alpha regulatory subunit of PKC. Expressed in endothelial cells, cultured fibroblasts and osteosarcoma, but not in platelets, leukocytes, monocytic cell lines or peripherical blood cells.

It is found in the cytoplasm. The protein localises to the cell cortex. The protein resides in the cytoskeleton. It localises to the membrane. Anchoring protein that mediates the subcellular compartmentation of protein kinase A (PKA) and protein kinase C (PKC). This is A-kinase anchor protein 12 (AKAP12) from Homo sapiens (Human).